The sequence spans 368 residues: Multifunctional CCA protein (368 aa).

ATP-binding residues include Gly-8 and Arg-11. Residues Gly-8 and Arg-11 each contribute to the CTP site. Residues Asp-21 and Asp-23 each coordinate Mg(2+). Residues Arg-91, Arg-137, and Arg-140 each contribute to the ATP site. Positions 91, 137, and 140 each coordinate CTP.

Belongs to the tRNA nucleotidyltransferase/poly(A) polymerase family. Bacterial CCA-adding enzyme type 1 subfamily. In terms of assembly, monomer. Can also form homodimers and oligomers. The cofactor is Mg(2+). It depends on Ni(2+) as a cofactor.

It carries out the reaction a tRNA precursor + 2 CTP + ATP = a tRNA with a 3' CCA end + 3 diphosphate. It catalyses the reaction a tRNA with a 3' CCA end + 2 CTP + ATP = a tRNA with a 3' CCACCA end + 3 diphosphate. Catalyzes the addition and repair of the essential 3'-terminal CCA sequence in tRNAs without using a nucleic acid template. Adds these three nucleotides in the order of C, C, and A to the tRNA nucleotide-73, using CTP and ATP as substrates and producing inorganic pyrophosphate. tRNA 3'-terminal CCA addition is required both for tRNA processing and repair. Also involved in tRNA surveillance by mediating tandem CCA addition to generate a CCACCA at the 3' terminus of unstable tRNAs. While stable tRNAs receive only 3'-terminal CCA, unstable tRNAs are marked with CCACCA and rapidly degraded. The protein is Multifunctional CCA protein of Pseudomonas putida (strain ATCC 47054 / DSM 6125 / CFBP 8728 / NCIMB 11950 / KT2440).